Here is a 378-residue protein sequence, read N- to C-terminus: Mannitol-1-phosphate 5-dehydrogenase (378 aa).

NAD(+) is bound at residue 4–15 (SVHFGAGNIGRG).

The protein belongs to the mannitol dehydrogenase family.

It catalyses the reaction D-mannitol 1-phosphate + NAD(+) = beta-D-fructose 6-phosphate + NADH + H(+). The chain is Mannitol-1-phosphate 5-dehydrogenase from Streptococcus pneumoniae (strain CGSP14).